The following is a 567-amino-acid chain: MLLSKHDYASLFGPTIGDSVRLADTELWIRIEKDFTVYGEEVKFGGGKVIRDGMGQGQMSSKDCVDLVLTNAVILDYWGIIKADIGINNGRISGIGKAGNPDVQPNVTISIGPGTEIIAAEGKIVTAGGIDAHVHFICPQQVEEALCSGITTFIGGGTGPATGSNATTCTPGPWFISRMLQVADTLPINIGVTGKGSASFPDALEEQIIAGAIGLKVHEDWGATPAAIDCCLNVADRFDIQVSMHTDTLNESGFVEDTLSAIKGRTVHAYHTEGAGGGHSPDIIRMCGFSNVLPSSTNPTMPYTVNTIDEHLDMMMICHNLNPNLPEDMAFSESRIRRETIAAEDVLHDLGALSMISSDSQAMGRVGEVILRTWQTAHKMKQQRGSLLGDATRYDDNVRVKRYIAKYTINPAITHGISHEVGSVEIGKLADLVLWSPVFFGVKPELIIKGGMIISSVMGDPNASIPTPQPVHYRLMFGARGKAKHATRMTFLSQVAYNSELTDYLKLVSLIGEVRHCRNIQKKHMINNSWQPVIEVDSQTYQVRANGELLTCEPASVLPMSQRYFLF.

A Urease domain is found at 128 to 567 (GGIDAHVHFI…LPMSQRYFLF (440 aa)). His-133, His-135, and Lys-216 together coordinate Ni(2+). Lys-216 carries the N6-carboxylysine modification. His-218 is a binding site for substrate. Residues His-245 and His-271 each coordinate Ni(2+). Residue His-319 is the Proton donor of the active site. Ni(2+) is bound at residue Asp-359.

Belongs to the metallo-dependent hydrolases superfamily. Urease alpha subunit family. As to quaternary structure, heterotrimer of UreA (gamma), UreB (beta) and UreC (alpha) subunits. Three heterotrimers associate to form the active enzyme. Requires Ni cation as cofactor. In terms of processing, carboxylation allows a single lysine to coordinate two nickel ions.

It localises to the cytoplasm. The catalysed reaction is urea + 2 H2O + H(+) = hydrogencarbonate + 2 NH4(+). The protein operates within nitrogen metabolism; urea degradation; CO(2) and NH(3) from urea (urease route): step 1/1. In Blochmanniella pennsylvanica (strain BPEN), this protein is Urease subunit alpha.